Here is a 90-residue protein sequence, read N- to C-terminus: Phosphocarrier protein NPr (90 aa).

Residues 2-90 form the HPr domain; sequence TVKQTVEISN…ALFNAGFDED (89 aa). The active-site Pros-phosphohistidine intermediate is the His-16.

Belongs to the HPr family.

Its subcellular location is the cytoplasm. Its function is as follows. Component of the phosphoenolpyruvate-dependent nitrogen-metabolic phosphotransferase system (nitrogen-metabolic PTS), that seems to be involved in regulating nitrogen metabolism. The phosphoryl group from phosphoenolpyruvate (PEP) is transferred to the phosphoryl carrier protein NPr by enzyme I-Ntr. Phospho-NPr then transfers it to EIIA-Ntr. Could function in the transcriptional regulation of sigma-54 dependent operons in conjunction with the NPr (PtsO) and EIIA-Ntr (PtsN) proteins. The polypeptide is Phosphocarrier protein NPr (ptsO) (Klebsiella oxytoca).